Reading from the N-terminus, the 484-residue chain is Cobyric acid synthase (484 aa).

The GATase cobBQ-type domain maps to 253-430 (SLRVAVVRFP…WHGAFEHDEF (178 aa)). C334 (nucleophile) is an active-site residue. H422 is a catalytic residue.

The protein belongs to the CobB/CobQ family. CobQ subfamily.

Its pathway is cofactor biosynthesis; adenosylcobalamin biosynthesis. In terms of biological role, catalyzes amidations at positions B, D, E, and G on adenosylcobyrinic A,C-diamide. NH(2) groups are provided by glutamine, and one molecule of ATP is hydrogenolyzed for each amidation. This chain is Cobyric acid synthase, found in Cutibacterium acnes (strain DSM 16379 / KPA171202) (Propionibacterium acnes).